Reading from the N-terminus, the 84-residue chain is Large ribosomal subunit protein bL27 (84 aa).

The interval 1-21 (MAHKKGGGSTKNGRDSNPQYL) is disordered.

Belongs to the bacterial ribosomal protein bL27 family.

The sequence is that of Large ribosomal subunit protein bL27 from Chloroherpeton thalassium (strain ATCC 35110 / GB-78).